Reading from the N-terminus, the 91-residue chain is Early E3B 10.4 kDa protein (91 aa).

The signal sequence occupies residues 1–22; that stretch reads MIPRNFFFTILICAFNVCATFT. Topologically, residues 23 to 34 are lumenal; it reads AVATASPDCIGP. Residues 35 to 60 form a helical membrane-spanning segment; that stretch reads FASYALFAFVTCICVCSIVCLVINFF. Residues 61–91 are Cytoplasmic-facing; the sequence is QLVDWIFVRIAYLRHHPEYRNQNVAALLRLI.

This sequence belongs to the adenoviridae E3B family.

The protein resides in the host endoplasmic reticulum membrane. Its function is as follows. Down-regulates the EGF receptor. The sequence is that of Early E3B 10.4 kDa protein from Homo sapiens (Human).